A 664-amino-acid chain; its full sequence is MESFMESLNRLKEIHEKEVLGLQNKLLELNSERCRDAQRIEELFSKNHQLREQQKTLKENLRVLENRLRAGLCDRCMVTQELARKRQQEFESSHLQNLQRIFILTNEMNGLKEENETLKEEVKRLRGLGDRPKPRAKEGTSDPPSPLLLPSPGGWKAITEKPPGGHEEAEEDHQGVGLRGEEKPAGHRTSPVAKISPGATLPESRAPDMSPQRISNQLHGTIAVVRPGSQACPADRGPANGTPPPLPARSSPPSPAYERGLSLDSFLRASRPSAMTHEAPKLSPKVDRLCLLNRPLSLHLQSPHSSPLAPAAAPSDPRLQDLKAREAEAWEEPTELLGLPSALAGMQDLRLEGALHLLLAQQQLRARARAGSVRPRGQPTPGEMLPSLPVGSDSEGPENEGTRAALAAAGLSGGRHTQPAGPGRAQRTEAAATQDCALDKPLDLSEWGRARGQDTPKPAGQHGSLSPAAAHTASPEPPTQSGPLTRSPQALSNGTKGTRVPEQEEASTPMDPSRPLPGSQLSLSSPGSTEDEDTGRPLPPPHPQPPPHPQPPDLDGHPEPSKAEVLRPESDELDETDTPGSEVGLSSQAEATTSTTGEGPECICTQEHGQGPPRKRKRASEPGDKASKKPSRGRRKLTATEGPGSPRDAEDHSPSPNSSPWEET.

The segment covering 125-140 (LRGLGDRPKPRAKEGT) has biased composition (basic and acidic residues). Disordered regions lie at residues 125–284 (LRGL…KLSP) and 369–664 (RAGS…WEET). The span at 241–255 (GTPPPLPARSSPPSP) shows a compositional bias: pro residues. A compositionally biased stretch (basic and acidic residues) spans 437-454 (ALDKPLDLSEWGRARGQD). The span at 481–496 (SGPLTRSPQALSNGTK) shows a compositional bias: polar residues. Low complexity predominate over residues 516–528 (LPGSQLSLSSPGS). The segment covering 537–552 (PLPPPHPQPPPHPQPP) has biased composition (pro residues). Residues 554–570 (LDGHPEPSKAEVLRPES) show a composition bias toward basic and acidic residues. The segment covering 584-597 (GLSSQAEATTSTTG) has biased composition (polar residues). The span at 628–637 (KKPSRGRRKL) shows a compositional bias: basic residues. Residues 654–664 (PSPNSSPWEET) show a composition bias toward polar residues.

This Homo sapiens (Human) protein is RBBP8 N-terminal-like protein (RBBP8NL).